Reading from the N-terminus, the 243-residue chain is Ubiquinone/menaquinone biosynthesis C-methyltransferase UbiE (243 aa).

Residues threonine 69, aspartate 90, and 116–117 (DA) each bind S-adenosyl-L-methionine.

This sequence belongs to the class I-like SAM-binding methyltransferase superfamily. MenG/UbiE family.

The enzyme catalyses a 2-demethylmenaquinol + S-adenosyl-L-methionine = a menaquinol + S-adenosyl-L-homocysteine + H(+). It catalyses the reaction a 2-methoxy-6-(all-trans-polyprenyl)benzene-1,4-diol + S-adenosyl-L-methionine = a 5-methoxy-2-methyl-3-(all-trans-polyprenyl)benzene-1,4-diol + S-adenosyl-L-homocysteine + H(+). It functions in the pathway quinol/quinone metabolism; menaquinone biosynthesis; menaquinol from 1,4-dihydroxy-2-naphthoate: step 2/2. Its pathway is cofactor biosynthesis; ubiquinone biosynthesis. In terms of biological role, methyltransferase required for the conversion of demethylmenaquinol (DMKH2) to menaquinol (MKH2) and the conversion of 2-polyprenyl-6-methoxy-1,4-benzoquinol (DDMQH2) to 2-polyprenyl-3-methyl-6-methoxy-1,4-benzoquinol (DMQH2). The chain is Ubiquinone/menaquinone biosynthesis C-methyltransferase UbiE from Burkholderia multivorans (strain ATCC 17616 / 249).